The sequence spans 93 residues: Antitoxin EndoAI (93 aa).

The protein belongs to the MazE/EndoAI family. Homodimer, forms a heterohexamer composed of alternating toxin and antitoxin homodimers which inhibits the toxin's endoribonuclease activity. Antitoxin prevents RNA binding to the endoribonuclease.

Antitoxin component of a type II toxin-antitoxin (TA) system. Antitoxin that directly inhibits activity of EndoA in vitro. Upon expression in E.coli counteracts inhibitory effect of endoribonuclease EndoA. The EndoA-EndoAI complex does not seem to bind its own promoter. The chain is Antitoxin EndoAI from Bacillus subtilis (strain 168).